We begin with the raw amino-acid sequence, 285 residues long: Cytochrome c1 (285 aa).

Positions Met1–Ala22 are cleaved as a signal peptide. Heme c contacts are provided by Cys58, Cys61, His62, and Met207. The chain crosses the membrane as a helical span at residues Ala251–Thr269.

As to quaternary structure, the main subunits of complex b-c1 are: cytochrome b, cytochrome c1 and the Rieske protein. In terms of processing, binds 1 heme c group covalently per subunit.

It is found in the cell membrane. Functionally, component of the ubiquinol-cytochrome c reductase complex (complex III or cytochrome b-c1 complex), which is a respiratory chain that generates an electrochemical potential coupled to ATP synthesis. c1 functions as an electron donor to cytochrome c. The chain is Cytochrome c1 (petC) from Cereibacter sphaeroides (Rhodobacter sphaeroides).